A 496-amino-acid polypeptide reads, in one-letter code: RNA-binding motif protein, Y chromosome, family 1 member D (496 aa).

Positions 8 to 85 (GKLFIGGLNR…KAIKVEQAKK (78 aa)) constitute an RRM domain. 2 disordered regions span residues 67 to 349 (DMNG…HRDY) and 452 to 496 (KDQR…SSRY). Low complexity-rich tracts occupy residues 97–114 (PASS…SARG) and 149–159 (PVKRGPSSRSG). The span at 175–184 (NSWMGSQGPM) shows a compositional bias: polar residues. 6 stretches are compositionally biased toward basic and acidic residues: residues 204 to 214 (RNDRMSTRHDG), 242 to 253 (DNGHSNRDEHSS), 276 to 289 (AYRD…DESY), 313 to 326 (GYRD…HESY), 335 to 349 (SSRE…HRDY), and 484 to 496 (GESR…SSRY).

Interacts with splicing factor proteins SFRS3/SRP20, TRA2B/SFRS10, KHDRBS1/SAM68 and KHDRBS3. In terms of tissue distribution, testis-specific.

Its subcellular location is the nucleus. Its function is as follows. RNA-binding protein which may be involved in spermatogenesis. Required for sperm development, possibly by participating in pre-mRNA splicing in the testis. The polypeptide is RNA-binding motif protein, Y chromosome, family 1 member D (RBMY1D) (Homo sapiens (Human)).